The following is a 240-amino-acid chain: ATP-dependent dethiobiotin synthetase BioD (240 aa).

13–18 (GVGKTI) lines the ATP pocket. Thr17 serves as a coordination point for Mg(2+). Lys38 is an active-site residue. Residue Thr42 participates in substrate binding. ATP is bound by residues Asp55, 116–119 (EGVG), and 214–216 (PYL). Positions 55 and 116 each coordinate Mg(2+).

The protein belongs to the dethiobiotin synthetase family. Homodimer. Requires Mg(2+) as cofactor.

Its subcellular location is the cytoplasm. It carries out the reaction (7R,8S)-7,8-diammoniononanoate + CO2 + ATP = (4R,5S)-dethiobiotin + ADP + phosphate + 3 H(+). The protein operates within cofactor biosynthesis; biotin biosynthesis; biotin from 7,8-diaminononanoate: step 1/2. Catalyzes a mechanistically unusual reaction, the ATP-dependent insertion of CO2 between the N7 and N8 nitrogen atoms of 7,8-diaminopelargonic acid (DAPA, also called 7,8-diammoniononanoate) to form a ureido ring. This is ATP-dependent dethiobiotin synthetase BioD from Thermodesulfovibrio yellowstonii (strain ATCC 51303 / DSM 11347 / YP87).